The following is a 286-amino-acid chain: 3-hydroxyanthranilate 3,4-dioxygenase (286 aa).

A domain A (catalytic) region spans residues 1–160; sequence MERRLGVRAW…SEQYRTGKPI (160 aa). Residue Arg43 participates in O2 binding. Fe cation contacts are provided by His47, Glu53, and His91. Substrate is bound at residue Glu53. Substrate-binding residues include Arg95 and Glu105. The linker stretch occupies residues 161–177; the sequence is PDQLLKEPPFPLSTRSI. Positions 178 to 286 are domain B; the sequence is MEPMSLDAWL…QDPACKKPLG (109 aa).

Belongs to the 3-HAO family. Monomer. Fe(2+) serves as cofactor.

The protein localises to the cytoplasm. Its subcellular location is the cytosol. It catalyses the reaction 3-hydroxyanthranilate + O2 = (2Z,4Z)-2-amino-3-carboxymuconate 6-semialdehyde. The protein operates within cofactor biosynthesis; NAD(+) biosynthesis; quinolinate from L-kynurenine: step 3/3. In terms of biological role, catalyzes the oxidative ring opening of 3-hydroxyanthranilate to 2-amino-3-carboxymuconate semialdehyde, which spontaneously cyclizes to quinolinate. The sequence is that of 3-hydroxyanthranilate 3,4-dioxygenase from Homo sapiens (Human).